Reading from the N-terminus, the 123-residue chain is Small ribosomal subunit protein uS13 (123 aa).

The segment at 94-123 (AGLPVRGQRTKTNARTRKGPKKTVGVQRKK) is disordered. A compositionally biased stretch (basic residues) spans 101-123 (QRTKTNARTRKGPKKTVGVQRKK).

This sequence belongs to the universal ribosomal protein uS13 family. Part of the 30S ribosomal subunit. Forms a loose heterodimer with protein S19. Forms two bridges to the 50S subunit in the 70S ribosome.

In terms of biological role, located at the top of the head of the 30S subunit, it contacts several helices of the 16S rRNA. In the 70S ribosome it contacts the 23S rRNA (bridge B1a) and protein L5 of the 50S subunit (bridge B1b), connecting the 2 subunits; these bridges are implicated in subunit movement. Contacts the tRNAs in the A and P-sites. The polypeptide is Small ribosomal subunit protein uS13 (Acetivibrio thermocellus (strain ATCC 27405 / DSM 1237 / JCM 9322 / NBRC 103400 / NCIMB 10682 / NRRL B-4536 / VPI 7372) (Clostridium thermocellum)).